We begin with the raw amino-acid sequence, 184 residues long: Glutathione-regulated potassium-efflux system ancillary protein KefG (184 aa).

Belongs to the NAD(P)H dehydrogenase (quinone) family. KefG subfamily. As to quaternary structure, interacts with KefB.

It is found in the cell inner membrane. The enzyme catalyses a quinone + NADH + H(+) = a quinol + NAD(+). It carries out the reaction a quinone + NADPH + H(+) = a quinol + NADP(+). Functionally, regulatory subunit of a potassium efflux system that confers protection against electrophiles. Required for full activity of KefB. This chain is Glutathione-regulated potassium-efflux system ancillary protein KefG, found in Escherichia coli O8 (strain IAI1).